A 272-amino-acid chain; its full sequence is DNA repair protein RecO (272 aa).

It belongs to the RecO family.

Involved in DNA repair and RecF pathway recombination. This Limosilactobacillus fermentum (strain NBRC 3956 / LMG 18251) (Lactobacillus fermentum) protein is DNA repair protein RecO.